We begin with the raw amino-acid sequence, 180 residues long: MQPTSSMNEEFLKKWQMGLQIFRPSIDNTSVHERKKAIKLSADVAMASLRKGTTCWSRALIEKTATEDNFLVRQMLSGIKAETLINKKLPKKTVCHRKIVRRSKKILRRKSKSASEEAAAKAKRLVKRRTQGLRNVVPGGELMSNDVLLLQETLDYIVSLQTQVNVMRSIVDAAEAEIER.

The 51-residue stretch at Lys110 to Leu160 folds into the bHLH domain.

The protein belongs to the bHLH protein family.

The protein localises to the nucleus. In terms of biological role, functions redundandly with IBH1/BHLH158 in a regulation node known as the incoherent feed-forward loop (FFL). Acts as transcriptional repressor that negatively regulates cell and organ elongation in response to gibberellin (GA) and brassinosteroid (BR) signaling. The protein is Transcription factor IBH1-like 1 of Arabidopsis thaliana (Mouse-ear cress).